The sequence spans 363 residues: Cytoplasmic envelopment protein 2 (363 aa).

Belongs to the herpesviridae cytoplasmic envelopment protein 2 family. As to quaternary structure, interacts with cytoplasmic envelopment protein 3 and with the capsid.

It is found in the virion tegument. The protein localises to the host cytoplasm. The protein resides in the host nucleus. Functionally, plays a critical role in cytoplasmic virus egress. Participates in the final step of tegumentation and envelope acquisition within the host cytoplasm by directly interacting with the capsid. Upon virion binding to target cell, a signaling cascade is triggered to disrupt the interaction with the capsid, thereby preparing capsid uncoating. In Varicella-zoster virus (strain Dumas) (HHV-3), this protein is Cytoplasmic envelopment protein 2 (44).